Consider the following 317-residue polypeptide: MITRLKNWPRLLKTPLQIARHSIQQFSHLAGHYERPPQSGKSSRDPYLVTVVQGRSKKPRFPGERANQRFGEDSWFVRSTPLAEVMGVADGVGGWRDVGVDAGRFAKELMTCCSGQTQRSGFDGRSPRNLLIASFQELTHREHPVVGSSTACLATMHRKDCTLYTANLGDSGFLVVRNGRVLHRSVEQTHDFNTPYQLTVPPEDRKECYYCDKPEMAVSTRHSLLPGDLVLLATDGLFDNMPESMLLKILNGLKERGERDLLQCASQVVEKARELSLNATFQSPFAIKARQHNVSYSGGGKPDDITLILASVEVQSA.

Residues 46 to 312 (PYLVTVVQGR…DDITLILASV (267 aa)) enclose the PPM-type phosphatase domain. The Mn(2+) site is built by aspartate 90, glycine 91, and aspartate 235.

It belongs to the PP2C family. Mg(2+) serves as cofactor. The cofactor is Mn(2+).

It carries out the reaction O-phospho-L-seryl-[protein] + H2O = L-seryl-[protein] + phosphate. The catalysed reaction is O-phospho-L-threonyl-[protein] + H2O = L-threonyl-[protein] + phosphate. This Drosophila erecta (Fruit fly) protein is Protein phosphatase PTC7 homolog fig.